The primary structure comprises 398 residues: O-methyltransferase aoiO (398 aa).

Position 251 (D251) interacts with S-adenosyl-L-methionine. The active-site Proton acceptor is H299.

The protein belongs to the class I-like SAM-binding methyltransferase superfamily. Cation-independent O-methyltransferase family.

Its function is as follows. O-methyltransferase; part of the gene cluster that mediates the biosynthesis of a methylated derivative of known natural products orthosporin and diaporthin. Seems not to be involved in the biosynthesis of the identified final product of the pathway and its function has still to be determined. This Aspergillus oryzae (strain ATCC 42149 / RIB 40) (Yellow koji mold) protein is O-methyltransferase aoiO.